A 301-amino-acid chain; its full sequence is Nucleotide-binding protein Helmi_06460 (301 aa).

17-24 provides a ligand contact to ATP; sequence GLSGAGKS. Residue 68-71 coordinates GTP; it reads DIRG.

It belongs to the RapZ-like family.

In terms of biological role, displays ATPase and GTPase activities. This is Nucleotide-binding protein Helmi_06460 from Heliobacterium modesticaldum (strain ATCC 51547 / Ice1).